A 458-amino-acid polypeptide reads, in one-letter code: Biphenyl dioxygenase subunit alpha (458 aa).

One can recognise a Rieske domain in the interval 58–156 (WLLLGHESHV…KEGDCGFDKA (99 aa)). Residues C100, H102, C120, and H123 each contribute to the [2Fe-2S] cluster site. 2 residues coordinate Fe cation: H233 and H239.

It belongs to the bacterial ring-hydroxylating dioxygenase alpha subunit family. As to quaternary structure, heterohexamer consisting of three BphA subunits and three BphE subunits. A ferredoxin (BphF) and a ferredoxin reductase (BphG) must be present to obtain activity. It depends on [2Fe-2S] cluster as a cofactor. Fe cation serves as cofactor.

The enzyme catalyses biphenyl + NADH + O2 + H(+) = (2R,3S)-3-phenylcyclohexa-3,5-diene-1,2-diol + NAD(+). It functions in the pathway xenobiotic degradation; biphenyl degradation; 2-hydroxy-2,4-pentadienoate and benzoate from biphenyl: step 1/4. The protein is Biphenyl dioxygenase subunit alpha (bphA) of Metapseudomonas furukawaii (Pseudomonas furukawaii).